Here is a 652-residue protein sequence, read N- to C-terminus: ATP-binding cassette sub-family G member 5 (652 aa).

Positions 1–30 (MSELPFLSPEGARGPHNNRGSQSSLEEGSV) are disordered. The Cytoplasmic portion of the chain corresponds to 1–384 (MSELPFLSPE…RVTRNLMRNK (384 aa)). A compositionally biased stretch (polar residues) spans 18–30 (NRGSQSSLEEGSV). An ABC transporter domain is found at 39–294 (LGVLNVSFSV…FNNCGYPCPE (256 aa)). 87 to 94 (GSSGSGKT) contacts ATP. Residues 385-405 (QVVIMRLVQNLIMGLFLIFYL) form a helical membrane-spanning segment. Residues 389–646 (MRLVQNLIMG…ILGMVVFKVR (258 aa)) enclose the ABC transmembrane type-2 domain. Residues 406 to 422 (LRVQNNMLKGAVQDRVG) are Extracellular-facing. Residues 423–443 (LLYQLVGATPYTGMLNAVNLF) traverse the membrane as a helical segment. The Cytoplasmic portion of the chain corresponds to 444–468 (PMLRAVSDQESQDGLYQKWQMLLAY). The helical transmembrane segment at 469-490 (VLHALPFSIVATVIFSSVCYWT) threads the bilayer. Topologically, residues 491–501 (LGLYPEVARFG) are extracellular. The helical transmembrane segment at 502 to 522 (YFSAALLAPHLIGEFLTLVLL) threads the bilayer. At 523-529 (GMVQNPN) the chain is on the cytoplasmic side. The helical transmembrane segment at 530–550 (IVNSIVALLSISGLLIGSGFI) threads the bilayer. At 551–624 (RNIEEMPIPL…PGATSRFTTN (74 aa)) the chain is on the extracellular side. Asn585 and Asn592 each carry an N-linked (GlcNAc...) asparagine glycan. Residues 625–645 (FLILYSFIPTLVILGMVVFKV) traverse the membrane as a helical segment. The Cytoplasmic segment spans residues 646 to 652 (RDYLISR).

The protein belongs to the ABC transporter superfamily. ABCG family. Eye pigment precursor importer (TC 3.A.1.204) subfamily. Heterodimer with ABCG8. Mg(2+) is required as a cofactor. N-glycosylated. N-glycosylation is important for efficient export out of the endoplasmic reticulum. As to expression, detected in liver (at protein level). Expressed only in liver and intestine.

The protein localises to the cell membrane. It is found in the apical cell membrane. It catalyses the reaction cholesterol(in) + ATP + H2O = cholesterol(out) + ADP + phosphate + H(+). The catalysed reaction is sitosterol(in) + ATP + H2O = sitosterol(out) + ADP + phosphate + H(+). ABCG5 and ABCG8 form an obligate heterodimer that mediates Mg(2+)- and ATP-dependent sterol transport across the cell membrane. Plays an essential role in the selective transport of dietary plant sterols and cholesterol in and out of the enterocytes and in the selective sterol excretion by the liver into bile. Required for normal sterol homeostasis. The heterodimer with ABCG8 has ATPase activity. This Rattus norvegicus (Rat) protein is ATP-binding cassette sub-family G member 5.